Consider the following 370-residue polypeptide: Ubiquitin carboxyl-terminal hydrolase 12 (370 aa).

The Required for plasma membrane localization of USP12/WDR20 signature appears at 1 to 4 (MEIL). The region spanning 39-369 (FGLVNFGNTC…SGYILFYQSR (331 aa)) is the USP domain. The active-site Nucleophile is the cysteine 48. The tract at residues 145-169 (KQEKQNGRLPNGNIDNENNNSTPDP) is disordered. A compositionally biased stretch (polar residues) spans 157–168 (NIDNENNNSTPD). Zn(2+) contacts are provided by cysteine 186, cysteine 189, cysteine 233, and cysteine 236. Histidine 317 acts as the Proton acceptor in catalysis.

Belongs to the peptidase C19 family. USP12/USP46 subfamily. Interacts with WDR48. Interacts with WDR20; this interaction promotes translocation of the USP12 complex to the plasma membrane. Component of the USP12-WDR20-WDR48 deubiquitinating complex. Component of the USP12-DMWD-WDR48 deubiquitinating complex. Interacts with PHLPP1. Interacts with RBPJ. Interacts with CBP; this interaction blocks the acetyltransferase activity of CREBBP. Interacts with ITCH; the interaction is more efficient when both USP12 and WDR48/UAF1 are involved and may mediate recruitment of the USP12 deubiquitinating complex to Notch. Interacts with OPTN and SQSTM1/p62; the interaction is independent of deubiquitinase activity and may be involved in regulation of autophagic flux. In terms of assembly, (Microbial infection) Interacts with Epstein-Barr virus protein EBNA3.

The protein resides in the nucleus. Its subcellular location is the cytoplasm. It localises to the cell membrane. The enzyme catalyses Thiol-dependent hydrolysis of ester, thioester, amide, peptide and isopeptide bonds formed by the C-terminal Gly of ubiquitin (a 76-residue protein attached to proteins as an intracellular targeting signal).. Its activity is regulated as follows. Activated by interaction with WDR20, WDR48 and DMWD through different allosteric mechanisms. In terms of biological role, deubiquitinating enzyme that plays various roles in the regulation of the immune response and inflammation. During TCR engagement and activation, translocates into the cytoplasm and deubiquitinates its substrates LAT and TRAT1 and prevents their lysosome-dependent degradation to stabilize the TCR signaling complex at the plasma membrane. Plays an essential role in the selective LPS-induced macrophage response through the activation of NF-kappa-B pathway. In addition, promotes that antiviral immune response through targeting DNA sensor IFI16 to inhibit its proteasome-dependent degradation. Participates in the interferon signaling pathway and antiviral response independently of its deubiquitinase activity by maintaining nuclear phosphorylated STAT1 levels via inhibition of its CREBBP-mediated acetylation and subsequent dephosphorylation. Plays an intrinsic role in promoting the differentiation, activation and proliferation of CD4(+) T-cell by activating the NF-kappa-B signaling pathway through deubiquitinating and stabilizing B-cell lymphoma/leukemia 10/BCL10. In myeloid-derived suppressor cells promotes the activation of the NF-kappa-B via deubiquitination and stabilization of RELA. Regulates the 'Lys-63'-linked polyubiquitin chains of BAX and thereby modulates the mitochondrial apoptotic process. Negative regulator of NOTCH signaling that specifically deubiquitinates non-activated NOTCH receptors to target them for lysosomal degradation; deubiquitination of NOTCH stimulates its transport form late endosomes to lysosomes. Protects neurons against HTT/huntingtin-induced polyglutamine expansion-dependent neurodegeneration through regulation of autophagic flux. This function is independent of deubiquitinase activity or of other components of the USP12-WDR20-WDR48 deubiquitinating complex. In complex with WDR48, acts as a potential tumor suppressor by positively regulating PHLPP1 stability. Its function is as follows. (Microbial infection) Forms a complex with Epstein-Barr virus protein EBNA3 which is an active deubiquitinase activity that may select specific substrates to promote B-lymphocyte transformation. In Homo sapiens (Human), this protein is Ubiquitin carboxyl-terminal hydrolase 12 (USP12).